A 589-amino-acid polypeptide reads, in one-letter code: Serine/threonine-protein phosphatase 2A 65 kDa regulatory subunit A alpha isoform (589 aa).

At Ala2 the chain carries N-acetylalanine. HEAT repeat units lie at residues 8-46 (DSLY…GVER), 47-84 (TRSE…GGPE), 85-123 (YVHC…SPSD), 124-161 (LEAH…VSSA), 162-200 (VKAE…ELDN), 201-239 (VKSE…PQED), 240-278 (LEAL…GPEI), 279-321 (TKTD…RENV), 322-360 (IMTQ…GKDS), 361-399 (TIEH…GIRQ), 400-438 (LSQS…GVEF), 439-477 (FDEK…GKEW), 478-516 (AHAT…GQDI), 517-555 (TTKH…DNST), and 556-589 (LQSE…LSLA). The segment at 8 to 399 (DSLYPIAVLI…CVNEVIGIRQ (392 aa)) is PP2A subunit B binding. The interval 47-321 (TRSELLPFLT…NLSADCRENV (275 aa)) is polyoma small and medium T antigens Binding. The tract at residues 85-239 (YVHCLLPPLE…NIAQLLPQED (155 aa)) is SV40 small T antigen binding. Lys280 carries the post-translational modification N6-acetyllysine. A PP2A subunit C binding region spans residues 400–589 (LSQSLLPAIV…QEALTVLSLA (190 aa)).

The protein belongs to the phosphatase 2A regulatory subunit A family. PP2A consists of a common heterodimeric core enzyme, composed of PPP2CA a 36 kDa catalytic subunit (subunit C) and PPP2R1A a 65 kDa constant regulatory subunit (PR65 or subunit A), that associates with a variety of regulatory subunits. Proteins that associate with the core dimer include three families of regulatory subunits B (the R2/B/PR55/B55, R3/B''/PR72/PR130/PR59 and R5/B'/B56 families), the 48 kDa variable regulatory subunit, viral proteins, and cell signaling molecules. Found in a complex with at least ARL2, PPP2CB, PPP2R1A, PPP2R2A, PPP2R5E and TBCD. Interacts with the PP2A C catalytic subunit PPP2CA. Interacts with the PP2A B subunit PPP2R2A. Interacts with the PP2A B subunit PPP2R5D. Interacts with FOXO1; the interaction dephosphorylates FOXO1 on AKT-mediated phosphorylation sites. Interacts with IPO9. Interacts with TP53 and SGO1. Interacts with PLA2G16; this interaction might decrease PP2A activity. Interacts with CTTNBP2NL. Interacts with GNA12; the interaction promotes protein phosphatase 2A activation causing dephosphorylation of MAPT. Interacts with CIP2A; this interaction stabilizes CIP2A. Interacts with PABIR1/FAM122A. Interacts with ADCY8; antagonizes interaction between ADCY8 and calmodulin. Interacts with CRTC3 (when phosphorylated at 'Ser-391'). Interacts with SPRY2. Part of the core of STRIPAK complexes composed of PP2A catalytic and scaffolding subunits, the striatins (PP2A regulatory subunits), the striatin-associated proteins MOB4, STRIP1 and STRIP2, PDCD10 and members of the STE20 kinases, such as STK24 and STK26. Component of the Integrator-PP2A (INTAC) complex, composed of the Integrator core complex and protein phosphatase 2A subunits PPP2CA and PPP2R1A.

The protein localises to the cytoplasm. Its subcellular location is the nucleus. The protein resides in the chromosome. It localises to the centromere. It is found in the lateral cell membrane. The protein localises to the cell projection. Its subcellular location is the dendrite. The PR65 subunit of protein phosphatase 2A serves as a scaffolding molecule to coordinate the assembly of the catalytic subunit and a variable regulatory B subunit. Upon interaction with GNA12 promotes dephosphorylation of microtubule associated protein TAU/MAPT. Required for proper chromosome segregation and for centromeric localization of SGO1 in mitosis. Together with RACK1 adapter, mediates dephosphorylation of AKT1 at 'Ser-473', preventing AKT1 activation and AKT-mTOR signaling pathway. Dephosphorylation of AKT1 is essential for regulatory T-cells (Treg) homeostasis and stability. Part of the striatin-interacting phosphatase and kinase (STRIPAK) complexes. STRIPAK complexes have critical roles in protein (de)phosphorylation and are regulators of multiple signaling pathways including Hippo, MAPK, nuclear receptor and cytoskeleton remodeling. Different types of STRIPAK complexes are involved in a variety of biological processes such as cell growth, differentiation, apoptosis, metabolism and immune regulation. Key mediator of a quality checkpoint during transcription elongation as part of the Integrator-PP2A (INTAC) complex. The INTAC complex drives premature transcription termination of transcripts that are unfavorably configured for transcriptional elongation: within the INTAC complex, acts as a scaffolding subunit for PPP2CA, which catalyzes dephosphorylation of the C-terminal domain (CTD) of Pol II subunit POLR2A/RPB1 and SUPT5H/SPT5, thereby preventing transcriptional elongation. Regulates the recruitment of the SKA complex to kinetochores. This is Serine/threonine-protein phosphatase 2A 65 kDa regulatory subunit A alpha isoform (PPP2R1A) from Bos taurus (Bovine).